An 840-amino-acid polypeptide reads, in one-letter code: MVLNFLTRVFGSSNERAVKRLQPLVDKINALEPRFQKLTDNELAETTASFKLRLANGETLDDLLCEAFALVREASWRTLKMRHFDAQLIGGIALHQGIIAEMKTGEGKTLAATLPAYLNALSGKGVHIVTVNDYLARRDAEWMSTIYNFLNLSVGIIVHDLNDEERKKAYASDITYGTNNEFGFDYLRDNMKFDRESLAQKELNFAIVDEVDSILIDEARTPLIISGPAEKSTTLYAQTDTIISAFKKDIHYNVDEKAKSSTLTEEGVALGEQLLGVENLYDPSNIEILHHLNQAIKAHTLFKRDVDYIVKNDEVVIVDEFTGRLMTGRRYSEGLHQALEAKEGVKIANENQTLASVTFQNFFRMYKKLSGMTGTAETEAAEFKKIYDLDVLVIPTHKPMVRKDFPDLIYKTQKEKYQAAIQEIISLHKKGQPVLVGTIAIDVSEDISDKLKKRGIPHTVLNAKHHKAEAEIVANAGQRGAVTISTNMAGRGTDIVLGEGVKELGGLHILGTSRHESRRIDNQLRGRSGRQGDPGSSRFYLSLEDDLLRIFGGDRITAIMNKLGIDEGEPIEHGLISRAIENAQSKVEGHNFEIRKQLIEYDDVMNQQREVIYRQRRQILTDSDLSTLFKDMIQDQAWQIHAMYKNDKQHPMEWDLEGLKDTVKKQFNLEIDLSPAVCEDIDADALGELIETTAIDAYKAKESLLGPIDTQRLERYIMLQTVDSLWKDHLLNMDHLKEGIGLRGYAQQNPLILYKKEGYEMFEGLVERIKEETLGIFFRIQIAESEPLEPIQKPRQENLVFSHSDDSNVKKPVKRAQEKVGRNDLCPCGSGKKYKKCCGA.

ATP is bound by residues Q87, 105 to 109 (GEGKT), and D494. Positions 518-537 (RRIDNQLRGRSGRQGDPGSS) are disordered. The Zn(2+) site is built by C826, C828, C837, and C838.

It belongs to the SecA family. Monomer and homodimer. Part of the essential Sec protein translocation apparatus which comprises SecA, SecYEG and auxiliary proteins SecDF-YajC and YidC. Zn(2+) serves as cofactor.

It is found in the cell inner membrane. Its subcellular location is the cytoplasm. It carries out the reaction ATP + H2O + cellular proteinSide 1 = ADP + phosphate + cellular proteinSide 2.. Part of the Sec protein translocase complex. Interacts with the SecYEG preprotein conducting channel. Has a central role in coupling the hydrolysis of ATP to the transfer of proteins into and across the cell membrane, serving as an ATP-driven molecular motor driving the stepwise translocation of polypeptide chains across the membrane. The protein is Protein translocase subunit SecA of Desulforapulum autotrophicum (strain ATCC 43914 / DSM 3382 / VKM B-1955 / HRM2) (Desulfobacterium autotrophicum).